The primary structure comprises 339 residues: Protein FAM76B (339 aa).

Alanine 2 carries the N-acetylalanine modification. Residues serine 22 and serine 148 each carry the phosphoserine modification. Positions 144 to 243 (EQRKSLGSSH…INQSADSGGT (100 aa)) are disordered. The span at 148-160 (SLGSSHSNSSSSS) shows a compositional bias: low complexity. Basic residues predominate over residues 167–189 (HHPKHHHHHHHHHHRHSSSHHKI). Serine 193 carries the post-translational modification Phosphoserine. Threonine 215 is modified (phosphothreonine). Residues 215-224 (TPKKKPKLES) show a composition bias toward basic and acidic residues. Polar residues predominate over residues 228–243 (NGDSSSINQSADSGGT). Positions 248-328 (LISQLKEEVM…QVAALSKGKK (81 aa)) form a coiled coil.

It belongs to the FAM76 family. Interacts with HNRNPA2B1 (via C-terminus); the interaction results in retention of HNRNPA2B1 in the nucleus and inhibition of the NF-kappa-B-mediated inflammatory pathway.

It is found in the nucleus speckle. Functionally, negatively regulates the NF-kappa-B-mediated inflammatory pathway by preventing the translocation of HNRNPA2B1 from the nucleus to the cytoplasm. Inhibits the PI3K/Akt/NF-kappa-B pathway-mediated polarization of M1 macrophages by binding to and stabilizing PIK3CD mRNA, resulting in increased levels of PIK3CD protein and increased levels of phosphorylated downstream target AKT which leads to decreased NF-kappa-B signaling. The sequence is that of Protein FAM76B (FAM76B) from Homo sapiens (Human).